Consider the following 90-residue polypeptide: Probable Fe(2+)-trafficking protein (90 aa).

It belongs to the Fe(2+)-trafficking protein family.

Could be a mediator in iron transactions between iron acquisition and iron-requiring processes, such as synthesis and/or repair of Fe-S clusters in biosynthetic enzymes. The chain is Probable Fe(2+)-trafficking protein from Paraburkholderia xenovorans (strain LB400).